The primary structure comprises 862 residues: Dipeptidyl peptidase 9 (862 aa).

Active-site charge relay system residues include serine 729, aspartate 807, and histidine 839. Serine 729 is a Val-boroPro binding site.

Belongs to the peptidase S9B family. DPPIV subfamily. Homodimer. Forms a ternary complex with NLRP1, composed of a DPP9 homodimer, one full-length NLRP1 protein, and one cleaved C-terminus of NLRP1 (NACHT, LRR and PYD domains-containing protein 1, C-terminus). Forms a ternary complex with CARD8, composed of a DPP9 homodimer, one full-length NLRP1 protein, and one cleaved C-terminus of CARD8 (Caspase recruitment domain-containing protein 8, C-terminus). In the ternary complex, only one subunit of the DPP9 homodimer is bound to NLRP1 or CARD8. Detected in kidney, skin, brain, thymus and liver (at protein level).

The protein localises to the cytoplasm. The protein resides in the cytosol. It carries out the reaction Release of an N-terminal dipeptide, Xaa-Yaa-|-Zaa-, from a polypeptide, preferentially when Yaa is Pro, provided Zaa is neither Pro nor hydroxyproline.. With respect to regulation, inhibited by the serine proteinase inhibitor 4-(2-aminoethyl)benzenesulphonyl fluoride (AEBSF), and by di-isopropylfluorophosphate. Inhibited by Val-boroPro (Talabostat, PT-100), a non-selective inhibitor, which triggers pyroptosis in monocytes and macrophages. Val-boroPro inhibits activity by binding to the active site, mimicking a substrate-bound state, thereby displacing the C-terminal fragment of NLRP1, leading to activation of the NLRP1 inflammasome. In contrast, Val-boroPro does not directly displaces CARD8: it acts by promoting degradation of the N-terminal part of CARD8, leading to indirect disruption of the ternary complex. Dipeptidyl peptidase that cleaves off N-terminal dipeptides from proteins having a Pro or Ala residue at position 2. Acts as a key inhibitor of caspase-1-dependent monocyte and macrophage pyroptosis in resting cells by preventing activation of NLRP1 and CARD8. Sequesters the cleaved C-terminal part of NLRP1 and CARD8, which respectively constitute the active part of the NLRP1 and CARD8 inflammasomes, in a ternary complex, thereby preventing their oligomerization and activation. The dipeptidyl peptidase activity is required to suppress NLRP1 and CARD8; however, neither NLRP1 nor CARD8 are bona fide substrates of DPP9, suggesting the existence of substrate(s) required for NLRP1 and CARD8 inhibition. This Mus musculus (Mouse) protein is Dipeptidyl peptidase 9.